Consider the following 759-residue polypeptide: Phosphoribosylformylglycinamidine synthase subunit PurL (759 aa).

Residue histidine 46 is part of the active site. Positions 49 and 88 each coordinate ATP. Position 90 (glutamate 90) interacts with Mg(2+). Substrate contacts are provided by residues 91 to 94 (SHNH) and arginine 113. Histidine 92 serves as the catalytic Proton acceptor. Aspartate 114 contacts Mg(2+). Glutamine 237 contributes to the substrate binding site. Aspartate 265 is a binding site for Mg(2+). 309–311 (ESQ) provides a ligand contact to substrate. The ATP site is built by aspartate 498 and glycine 535. Asparagine 536 contributes to the Mg(2+) binding site. Serine 538 contacts substrate.

This sequence belongs to the FGAMS family. In terms of assembly, monomer. Part of the FGAM synthase complex composed of 1 PurL, 1 PurQ and 2 PurS subunits.

It localises to the cytoplasm. The catalysed reaction is N(2)-formyl-N(1)-(5-phospho-beta-D-ribosyl)glycinamide + L-glutamine + ATP + H2O = 2-formamido-N(1)-(5-O-phospho-beta-D-ribosyl)acetamidine + L-glutamate + ADP + phosphate + H(+). It participates in purine metabolism; IMP biosynthesis via de novo pathway; 5-amino-1-(5-phospho-D-ribosyl)imidazole from N(2)-formyl-N(1)-(5-phospho-D-ribosyl)glycinamide: step 1/2. In terms of biological role, part of the phosphoribosylformylglycinamidine synthase complex involved in the purines biosynthetic pathway. Catalyzes the ATP-dependent conversion of formylglycinamide ribonucleotide (FGAR) and glutamine to yield formylglycinamidine ribonucleotide (FGAM) and glutamate. The FGAM synthase complex is composed of three subunits. PurQ produces an ammonia molecule by converting glutamine to glutamate. PurL transfers the ammonia molecule to FGAR to form FGAM in an ATP-dependent manner. PurS interacts with PurQ and PurL and is thought to assist in the transfer of the ammonia molecule from PurQ to PurL. This chain is Phosphoribosylformylglycinamidine synthase subunit PurL, found in Anaeromyxobacter dehalogenans (strain 2CP-C).